Reading from the N-terminus, the 382-residue chain is Mannitol-1-phosphate 5-dehydrogenase (382 aa).

A3–G14 is a binding site for NAD(+).

It belongs to the mannitol dehydrogenase family.

The enzyme catalyses D-mannitol 1-phosphate + NAD(+) = beta-D-fructose 6-phosphate + NADH + H(+). The chain is Mannitol-1-phosphate 5-dehydrogenase from Salmonella agona (strain SL483).